The sequence spans 832 residues: MLPFLLATLGTTALNNSNPKDYCYSARIRSTVLQGLPFGGVPTVLALDFMCFLALLFLFSILRKVAWDYGRLALVTDADRLRRQERDRVEQEYVASAMHGDSHDRYERLTSVSSSVDFDQRDNGFCSWLTAIFRIKDDEIRDKCGGDAVHYLSFQRHIIGLLVVVGVLSVGIVLPVNFSGDLLENNAYSFGRTTIANLKSGNNLLWLHTSFAFLYLLLTVYSMRRHTSKMRYKEDDLVKRTLFINGISKYAESEKIKKHFEEAYPNCTVLEARPCYNVARLMFLDAERKKAERGKLYFTNLQSKENVPTMINPKPCGHLCCCVVRGCEQVEAIEYYTKLEQKLKEDYKREKEKVNEKPLGMAFVTFHNETITAIILKDFNVCKCQGCTCRGEPRPSSCSESLHISNWTVSYAPDPQNIYWEHLSIRGFIWWLRCLVINVVLFILLFFLTTPAIIITTMDKFNVTKPVEYLNNPIITQFFPTLLLWCFSALLPTIVYYSAFFEAHWTRSGENRTTMHKCYTFLIFMVLLLPSLGLSSLDLFFRWLFDKKFLAEAAIRFECVFLPDNGAFFVNYVIASAFIGNAMDLLRIPGLLMYMIRLCLARSAAERRNVKRHQAYEFQFGAAYAWMMCVFTVVMTYSITCPIIVPFGLMYMLLKHLVDRYNLYYAYLPAKLDKKIHSGAVNQVVAAPILCLFWLLFFSTMRTGFLAPTSMFTFVVLVITIVICLCHVCFGHFKYLSAHNYKIEHTETDTVDPRSNGRPPTAAAVPKSAKYIAQVLQDSEVDGDGDGAPGSSGDEPPSSSSQDEELLMPPDALTDTDFQSCEDSLIENEIHQ.

Residues 1-40 (MLPFLLATLGTTALNNSNPKDYCYSARIRSTVLQGLPFGG) lie on the Extracellular side of the membrane. The helical transmembrane segment at 41 to 65 (VPTVLALDFMCFLALLFLFSILRKV) threads the bilayer. The S-palmitoyl cysteine moiety is linked to residue cysteine 51. Residues 66-145 (AWDYGRLALV…KDDEIRDKCG (80 aa)) are Cytoplasmic-facing. Residues 86-88 (RDR) carry the Mediates endoplasmic reticulum retention motif. Serine 111, serine 113, serine 114, and serine 115 each carry phosphoserine. Cysteine 126 is lipidated: S-palmitoyl cysteine. A helical transmembrane segment spans residues 146 to 178 (GDAVHYLSFQRHIIGLLVVVGVLSVGIVLPVNF). Over 179–202 (SGDLLENNAYSFGRTTIANLKSGN) the chain is Extracellular. A helical membrane pass occupies residues 203–227 (NLLWLHTSFAFLYLLLTVYSMRRHT). Residues 228–427 (SKMRYKEDDL…IYWEHLSIRG (200 aa)) lie on the Cytoplasmic side of the membrane. The intracellular linker IL2; confers mechanosensitivity stretch occupies residues 231-426 (RYKEDDLVKR…NIYWEHLSIR (196 aa)). S-palmitoyl cysteine attachment occurs at residues cysteine 382 and cysteine 398. A helical membrane pass occupies residues 428–457 (FIWWLRCLVINVVLFILLFFLTTPAIIITT). The Extracellular segment spans residues 458–472 (MDKFNVTKPVEYLNN). Asparagine 462 carries N-linked (GlcNAc...) asparagine glycosylation. A helical transmembrane segment spans residues 473–502 (PIITQFFPTLLLWCFSALLPTIVYYSAFFE). Residues 503-506 (AHWT) are Cytoplasmic-facing. A helical transmembrane segment spans residues 507 to 543 (RSGENRTTMHKCYTFLIFMVLLLPSLGLSSLDLFFRW). Residues 544-566 (LFDKKFLAEAAIRFECVFLPDNG) are Extracellular-facing. Residues 567-599 (AFFVNYVIASAFIGNAMDLLRIPGLLMYMIRLC) traverse the membrane as a helical segment. The gating helix stretch occupies residues 567–599 (AFFVNYVIASAFIGNAMDLLRIPGLLMYMIRLC). The Cytoplasmic portion of the chain corresponds to 600–619 (LARSAAERRNVKRHQAYEFQ). Residues 620–638 (FGAAYAWMMCVFTVVMTYS) traverse the membrane as a helical segment. Residues 639-641 (ITC) lie on the Extracellular side of the membrane. The chain crosses the membrane as a helical span at residues 642–666 (PIIVPFGLMYMLLKHLVDRYNLYYA). The Cytoplasmic segment spans residues 667–673 (YLPAKLD). Residues 674 to 702 (KKIHSGAVNQVVAAPILCLFWLLFFSTMR) form a helical membrane-spanning segment. Residues 703–707 (TGFLA) are Extracellular-facing. Residues 708–728 (PTSMFTFVVLVITIVICLCHV) form a helical membrane-spanning segment. S-palmitoyl cysteine attachment occurs at residues cysteine 726 and cysteine 729. Residues 729-832 (CFGHFKYLSA…DSLIENEIHQ (104 aa)) lie on the Cytoplasmic side of the membrane. Positions 780-814 (EVDGDGDGAPGSSGDEPPSSSSQDEELLMPPDALT) are disordered. The span at 789 to 801 (PGSSGDEPPSSSS) shows a compositional bias: low complexity.

This sequence belongs to the CSC1 (TC 1.A.17) family. As to quaternary structure, monomer. Interacts with SLC19A2; interaction is required for the phospholipid scramblase activity. Palmitoylation is required for localization to the plasma membrane and stability. In terms of processing, N-Glycosylated.

It localises to the cell membrane. The protein localises to the endoplasmic reticulum membrane. Its subcellular location is the lysosome membrane. The protein resides in the early endosome membrane. It carries out the reaction Ca(2+)(in) = Ca(2+)(out). The catalysed reaction is Mg(2+)(in) = Mg(2+)(out). It catalyses the reaction K(+)(in) = K(+)(out). The enzyme catalyses Na(+)(in) = Na(+)(out). It carries out the reaction Cs(+)(in) = Cs(+)(out). The catalysed reaction is a 1,2-diacyl-sn-glycero-3-phosphocholine(in) = a 1,2-diacyl-sn-glycero-3-phosphocholine(out). It catalyses the reaction a sphingomyelin(in) = a sphingomyelin(out). Mechanosensitive cation channel with low conductance and high activation threshold. Osmosensitive cation channel preferentially activated by hypotonic stress. Also acts as a phospholipid scramblase in response to changes in membrane structure: upon changes in membrane curvature and thickness, alters its conformation and translocates phospholipids, such as phosphatidylcholine and sphingomyelin, thereby controlling plasma membrane lipid distribution. Forms a heterodimer with SLC19A2, which mediates phospholipid scramblase activity following Ca(2+) stimulation. Expressed in excitatory neurons of the subfornical organ and functions as a thirst receptor that mediates neuronal response to hyperosmolality to drive thirst and drinking behavior. Facilitates intestinal motility by promoting proliferation of intestinal stem cells. Essential for the baby's first breath and respiration throughout life. Upon lung inflation conducts cation currents in alveolar type 1 and 2 cells triggering lamellar body exocytosis and surfactant secretion into airspace. Acts as an osmosensor in cochlear outer hair cells (OHCs) where it mediates calcium influx and regulatory volume decrease response. Required for the maintenance of OHC morphology, OHC survival and normal hearing. In Homo sapiens (Human), this protein is Mechanosensitive cation channel TMEM63B.